Consider the following 399-residue polypeptide: S-adenosylmethionine synthase (399 aa).

An ATP-binding site is contributed by histidine 17. Aspartate 19 is a Mg(2+) binding site. Residue glutamate 45 coordinates K(+). The L-methionine site is built by glutamate 58 and glutamine 101. A flexible loop region spans residues 101–111; the sequence is QSADIAMGVDQ. ATP contacts are provided by residues 177 to 179, 244 to 245, aspartate 253, 259 to 260, alanine 276, and lysine 280; these read DGK, RF, and RK. Residue aspartate 253 participates in L-methionine binding. Residue lysine 284 coordinates L-methionine.

This sequence belongs to the AdoMet synthase family. Homotetramer; dimer of dimers. The cofactor is Mg(2+). It depends on K(+) as a cofactor.

The protein resides in the cytoplasm. It carries out the reaction L-methionine + ATP + H2O = S-adenosyl-L-methionine + phosphate + diphosphate. It participates in amino-acid biosynthesis; S-adenosyl-L-methionine biosynthesis; S-adenosyl-L-methionine from L-methionine: step 1/1. Its function is as follows. Catalyzes the formation of S-adenosylmethionine (AdoMet) from methionine and ATP. The overall synthetic reaction is composed of two sequential steps, AdoMet formation and the subsequent tripolyphosphate hydrolysis which occurs prior to release of AdoMet from the enzyme. This is S-adenosylmethionine synthase from Bacillus thuringiensis (strain Al Hakam).